The chain runs to 375 residues: Succinyl-diaminopimelate desuccinylase (375 aa).

Zn(2+) is bound at residue histidine 75. The active site involves aspartate 77. Aspartate 106 serves as a coordination point for Zn(2+). Glutamate 136 (proton acceptor) is an active-site residue. Residues glutamate 137, glutamate 165, and histidine 348 each contribute to the Zn(2+) site.

It belongs to the peptidase M20A family. DapE subfamily. In terms of assembly, homodimer. Zn(2+) is required as a cofactor. Co(2+) serves as cofactor.

The enzyme catalyses N-succinyl-(2S,6S)-2,6-diaminopimelate + H2O = (2S,6S)-2,6-diaminopimelate + succinate. Its pathway is amino-acid biosynthesis; L-lysine biosynthesis via DAP pathway; LL-2,6-diaminopimelate from (S)-tetrahydrodipicolinate (succinylase route): step 3/3. Catalyzes the hydrolysis of N-succinyl-L,L-diaminopimelic acid (SDAP), forming succinate and LL-2,6-diaminopimelate (DAP), an intermediate involved in the bacterial biosynthesis of lysine and meso-diaminopimelic acid, an essential component of bacterial cell walls. The protein is Succinyl-diaminopimelate desuccinylase of Novosphingobium aromaticivorans (strain ATCC 700278 / DSM 12444 / CCUG 56034 / CIP 105152 / NBRC 16084 / F199).